The following is a 427-amino-acid chain: Trigger factor (427 aa).

One can recognise a PPIase FKBP-type domain in the interval 163-248; it reads GDTVVIDFVG…IHEVKAKEVP (86 aa).

It belongs to the FKBP-type PPIase family. Tig subfamily.

It localises to the cytoplasm. The catalysed reaction is [protein]-peptidylproline (omega=180) = [protein]-peptidylproline (omega=0). In terms of biological role, involved in protein export. Acts as a chaperone by maintaining the newly synthesized protein in an open conformation. Functions as a peptidyl-prolyl cis-trans isomerase. The polypeptide is Trigger factor (Streptococcus suis (strain 05ZYH33)).